The following is a 305-amino-acid chain: Putative HTH-type transcriptional regulatory protein Saci_1344 (305 aa).

The HTH cro/C1-type domain occupies 128-183 (LREKREEKNMSLGELSQRLGVSRISVYDYEKEDSYVSIEVAEKLIEIFGDEVIGDI). Positions 139–158 (LGELSQRLGVSRISVYDYEK) form a DNA-binding region, H-T-H motif.

This Sulfolobus acidocaldarius (strain ATCC 33909 / DSM 639 / JCM 8929 / NBRC 15157 / NCIMB 11770) protein is Putative HTH-type transcriptional regulatory protein Saci_1344.